We begin with the raw amino-acid sequence, 286 residues long: Aquaporin PIP1-3 (286 aa).

Methionine 1 is modified (N-acetylmethionine). A disordered region spans residues 1–33; sequence MEGKEEDVRVGANKFPERQPIGTSAQTDKDYKE. The Cytoplasmic portion of the chain corresponds to 1–54; it reads MEGKEEDVRVGANKFPERQPIGTSAQTDKDYKEPPPAPFFEPGELSSWSFYRAG. A helical membrane pass occupies residues 55–75; the sequence is IAEFIATFLFLYITVLTVMGV. Over 76–81 the chain is Extracellular; the sequence is KRAPNM. A helical transmembrane segment spans residues 82–102; the sequence is CASVGIQGIAWAFGGMIFALV. Residues 103-132 lie on the Cytoplasmic side of the membrane; it reads YCTAGISGGHINPAVTFGLFLARKLSLTRA. An NPA 1 motif is present at residues 114–116; it reads NPA. A helical transmembrane segment spans residues 133-153; it reads VFYIVMQCLGAICGAGVVKGF. The Extracellular portion of the chain corresponds to 154–174; sequence QPNPYQTLGGGANTVAHGYTK. A helical transmembrane segment spans residues 175–195; the sequence is GSGLGAEIIGTFVLVYTVFSA. The Cytoplasmic segment spans residues 196-208; the sequence is TDAKRSARDSHVP. The helical transmembrane segment at 209 to 229 threads the bilayer; sequence ILAPLPIGFAVFLVHLATIPI. Topologically, residues 230-256 are extracellular; sequence TGTGINPARSLGAAIIYNKDHAWDDHW. The NPA 2 motif lies at 235–237; sequence NPA. A helical transmembrane segment spans residues 257–277; sequence IFWVGPFIGAALAALYHQLVI. Residues 278–286 lie on the Cytoplasmic side of the membrane; it reads RAIPFKSRS. Serine 284 carries the phosphoserine modification.

Belongs to the MIP/aquaporin (TC 1.A.8) family. PIP (TC 1.A.8.11) subfamily. As to expression, expressed in roots, above ground, ripening fruit, flower buds, green siliques and senescing leaves.

It is found in the cell membrane. Its function is as follows. Water channel required to facilitate the transport of water across cell membrane. Its function is impaired by Hg(2+). This is Aquaporin PIP1-3 (PIP1-3) from Arabidopsis thaliana (Mouse-ear cress).